A 450-amino-acid chain; its full sequence is MWEAIKDRETGRIRSNSFANRFKSRRILSLQLSNRKDFVSPHRGSVNSLQVDLTEGRYLLSGAADGSAAVFDVQRATDYEASGLIAKHKCIFTVDKQHENGHKYAISSAIWYPIDTGLFITGSFDHYLKVWDTNTAQAVVDFKMPGKVYRTAMSSMAMSHTLIAAGTEDVQVRLCDIASGAFSHTLSGHRDGVMSVEWSTSSEWVLYTGGCDGAIRFWDIRRAGCFRVLDQSQTQLGFRPPILKRTAVGSKLSSVAKSSLGGQNRLKTLQSKQTGSQSVKGSSSAKASVEKSRQKRIHPGMLSTLDRATAHYGAVTGLKATNDGMYLLSAGSDSRIRLWDIESGRNTLVNFETGRIQTNKGIQLDTSDDPALVFVPCMKTVKAFGMWSGRTTLMLRGHYESVNTCCFNSNDQELYTSGSDRQILVWSPGGTVEDEMVQDEVAEDKDNWSD.

WD repeat units lie at residues 41 to 81, 101 to 141, 148 to 185, and 188 to 228; these read PHRG…DYEA, GHKY…AVVD, VYRT…FSHT, and GHRD…CFRV. Positions 269–298 are disordered; sequence LQSKQTGSQSVKGSSSAKASVEKSRQKRIH. Over residues 271–287 the composition is skewed to low complexity; the sequence is SKQTGSQSVKGSSSAKA. 2 WD repeats span residues 310-349 and 397-436; these read AHYG…NTLV and GHYE…EDEM.

As to quaternary structure, interacts with DDB1A. Expressed in roots, leaves, stems, flowers and siliques.

It localises to the nucleus. Its function is as follows. Involved in UV-B tolerance and genome integrity. In association with DDB2, is necessary for repair of UV-B-induced DNA lesions. In Arabidopsis thaliana (Mouse-ear cress), this protein is WD repeat-containing protein ATCSA-1.